We begin with the raw amino-acid sequence, 285 residues long: MSSGRLLLGATPLGQPSDASPRLAAALATADVVAAEDTRRVRKLAKALDIRIGGRVVSLFDRVEALRVTALLDAINNGATVLVVSDAGTPVISDPGYRLVAACIDAGVSVTCLPGPSAVTTALVMSGLPAEKFCFEGFAPRKGAARRAWLAELAEERRTCVFFESPRRLAACLNDAVEQLGGARPAAICRELTKVHEEVVRGSLDELAIWAAGGVLGEITVVVAGAAPHAELSSLIAQVEEFVAAGIRVKDACSEVAAAHPGVRTRQLYDAVLQSRRETGGPAQP.

Belongs to the methyltransferase superfamily. RsmI family.

The protein localises to the cytoplasm. The catalysed reaction is cytidine(1402) in 16S rRNA + S-adenosyl-L-methionine = 2'-O-methylcytidine(1402) in 16S rRNA + S-adenosyl-L-homocysteine + H(+). Functionally, catalyzes the 2'-O-methylation of the ribose of cytidine 1402 (C1402) in 16S rRNA. This Mycobacterium tuberculosis (strain ATCC 25618 / H37Rv) protein is Ribosomal RNA small subunit methyltransferase I.